We begin with the raw amino-acid sequence, 87 residues long: DNA-directed RNA polymerase subunit omega (87 aa).

The protein belongs to the RNA polymerase subunit omega family. The RNAP catalytic core consists of 2 alpha, 1 beta, 1 beta' and 1 omega subunit. When a sigma factor is associated with the core the holoenzyme is formed, which can initiate transcription.

It catalyses the reaction RNA(n) + a ribonucleoside 5'-triphosphate = RNA(n+1) + diphosphate. Its function is as follows. Promotes RNA polymerase assembly. Latches the N- and C-terminal regions of the beta' subunit thereby facilitating its interaction with the beta and alpha subunits. The chain is DNA-directed RNA polymerase subunit omega from Pseudomonas putida (strain W619).